We begin with the raw amino-acid sequence, 117 residues long: Large ribosomal subunit protein bL20 (117 aa).

The protein belongs to the bacterial ribosomal protein bL20 family.

Binds directly to 23S ribosomal RNA and is necessary for the in vitro assembly process of the 50S ribosomal subunit. It is not involved in the protein synthesizing functions of that subunit. This Helicobacter hepaticus (strain ATCC 51449 / 3B1) protein is Large ribosomal subunit protein bL20.